We begin with the raw amino-acid sequence, 259 residues long: Undecaprenyl-diphosphatase 4 (259 aa).

The next 8 helical transmembrane spans lie at 1–21 (MNWL…FLPI), 39–59 (AGLF…FIYY), 71–91 (FSKL…IGLL), 99–119 (ISKT…FLYV), 133–153 (ITYK…FPAI), 173–193 (AAYF…ILQF), 208–228 (SLIV…SWMI), and 239–259 (FAYY…TDVF).

It belongs to the UppP family.

It is found in the cell membrane. It carries out the reaction di-trans,octa-cis-undecaprenyl diphosphate + H2O = di-trans,octa-cis-undecaprenyl phosphate + phosphate + H(+). Functionally, catalyzes the dephosphorylation of undecaprenyl diphosphate (UPP). Confers resistance to bacitracin. The chain is Undecaprenyl-diphosphatase 4 from Bacillus thuringiensis subsp. konkukian (strain 97-27).